Consider the following 390-residue polypeptide: MSVTIDPRRHDAVLFDTALNSTQALVRQLQQARVGTATFASGGGGHDAAIQALIESADRVGARPGRCVVITADAASVAAARDSGFALVIGVDQAGHRDALPDHGADTVLADLDEVRVRAGDRHMSELPDALQALGRPDGLTVPRPAVFFDFDGTLSEIVDDPDAATPTAGAVAALQQLAAQCPVAILSGRDLADVSQRVGLPGIWYAGSHGFELTAPDGTHHQNEAAAAAIPVLEQAAAQLRDRLGSIPGVMVEHKRFGVATHYRNAARNRVGKIAAVVRAAGQRDGLRVTTGREVIELHPDIDWDKGKTLRWVIDHLPDQRAAPLVPIYLGDDITDEDAFDAVGPNGVAIMVRHNEDGDRATAALFALESPARVAEFTGRLASQLSTLG.

Catalysis depends on D150, which acts as the Nucleophile. Positions 150, 152, and 333 each coordinate Mg(2+). D150 to D152 contributes to the substrate binding site.

It belongs to the trehalose phosphatase family. Mg(2+) is required as a cofactor.

It catalyses the reaction alpha,alpha-trehalose 6-phosphate + H2O = alpha,alpha-trehalose + phosphate. It participates in glycan biosynthesis; trehalose biosynthesis. In terms of biological role, removes the phosphate from trehalose 6-phosphate to produce free trehalose. This is Trehalose-phosphate phosphatase (otsB) from Mycobacterium ulcerans (strain Agy99).